The sequence spans 393 residues: CCA-adding enzyme (393 aa).

ATP is bound by residues Gly27 and Arg30. Gly27 and Arg30 together coordinate CTP. Asp40 and Asp42 together coordinate Mg(2+). ATP contacts are provided by Arg111, Asp154, Arg157, Arg160, and Arg163. Residues Arg111, Asp154, Arg157, Arg160, and Arg163 each contribute to the CTP site.

The protein belongs to the tRNA nucleotidyltransferase/poly(A) polymerase family. Bacterial CCA-adding enzyme type 3 subfamily. As to quaternary structure, homodimer. Requires Mg(2+) as cofactor.

The catalysed reaction is a tRNA precursor + 2 CTP + ATP = a tRNA with a 3' CCA end + 3 diphosphate. It catalyses the reaction a tRNA with a 3' CCA end + 2 CTP + ATP = a tRNA with a 3' CCACCA end + 3 diphosphate. In terms of biological role, catalyzes the addition and repair of the essential 3'-terminal CCA sequence in tRNAs without using a nucleic acid template. Adds these three nucleotides in the order of C, C, and A to the tRNA nucleotide-73, using CTP and ATP as substrates and producing inorganic pyrophosphate. tRNA 3'-terminal CCA addition is required both for tRNA processing and repair. Also involved in tRNA surveillance by mediating tandem CCA addition to generate a CCACCA at the 3' terminus of unstable tRNAs. While stable tRNAs receive only 3'-terminal CCA, unstable tRNAs are marked with CCACCA and rapidly degraded. The protein is CCA-adding enzyme of Listeria monocytogenes serotype 4a (strain HCC23).